The following is a 107-amino-acid chain: ATP synthase subunit c (107 aa).

The next 3 helical transmembrane spans lie at 4–24 (IVFL…SMNQ), 29–49 (FSIL…AIGM), and 74–94 (MFIA…IALI).

Belongs to the ATPase C chain family. In terms of assembly, F-type ATPases have 2 components, F(1) - the catalytic core - and F(0) - the membrane proton channel. F(1) has five subunits: alpha(3), beta(3), gamma(1), delta(1), epsilon(1). F(0) has three main subunits: a(1), b(2) and c(10-14). The alpha and beta chains form an alternating ring which encloses part of the gamma chain. F(1) is attached to F(0) by a central stalk formed by the gamma and epsilon chains, while a peripheral stalk is formed by the delta and b chains.

It localises to the cell inner membrane. Functionally, f(1)F(0) ATP synthase produces ATP from ADP in the presence of a proton or sodium gradient. F-type ATPases consist of two structural domains, F(1) containing the extramembraneous catalytic core and F(0) containing the membrane proton channel, linked together by a central stalk and a peripheral stalk. During catalysis, ATP synthesis in the catalytic domain of F(1) is coupled via a rotary mechanism of the central stalk subunits to proton translocation. Its function is as follows. Key component of the F(0) channel; it plays a direct role in translocation across the membrane. A homomeric c-ring of between 10-14 subunits forms the central stalk rotor element with the F(1) delta and epsilon subunits. This chain is ATP synthase subunit c, found in Campylobacter lari (strain RM2100 / D67 / ATCC BAA-1060).